Here is a 179-residue protein sequence, read N- to C-terminus: Large ribosomal subunit protein uL6 (179 aa).

This sequence belongs to the universal ribosomal protein uL6 family. In terms of assembly, part of the 50S ribosomal subunit.

In terms of biological role, this protein binds to the 23S rRNA, and is important in its secondary structure. It is located near the subunit interface in the base of the L7/L12 stalk, and near the tRNA binding site of the peptidyltransferase center. The chain is Large ribosomal subunit protein uL6 from Solidesulfovibrio magneticus (strain ATCC 700980 / DSM 13731 / RS-1) (Desulfovibrio magneticus).